A 574-amino-acid chain; its full sequence is Uric acid-xanthine permease (574 aa).

The segment at 1-20 (MDNSIHSTDGPDSVIPNSNP) is disordered. The next 12 membrane-spanning stretches (helical) occupy residues 77–97 (LLAFILGLQHALAMLAGVVTP), 111–131 (LQQYLVSTSLIVCGLLSMVQI), 141–161 (YYIGSGVLSVMGVSFSIISVA), 188–209 (AYGALIGTSACCALVEILLAFV), 217–237 (IFPPIVTGPTVMLIGISLIGT), 264–284 (LPWGSPEFIGLGFLVFVSIIL), 296–315 (CSVVIGLLVGCIVAAACGYF), 338–361 (VYGPMVLPIIAVFIICACECIGDV), 427–447 (CCLILIVAGIFAKFAAAIVAI), 451–471 (VMGGMKTFLFASVVISGQAIV), 482–502 (FILTASMALGYGATLVPTWFG), and 522–542 (LVLETGFAVTAFVAMLLNAIM). The interval 555–574 (MPVSAHDNRDGEAEYQSKQA) is disordered. A Glycyl lysine isopeptide (Lys-Gly) (interchain with G-Cter in ubiquitin) cross-link involves residue K572.

It belongs to the nucleobase:cation symporter-2 (NCS2) (TC 2.A.40) family. Ubiquitinated by hulA. Ubiquitination leads to internalization, sorting into the endosomal pathway to the vacuolar lumen where uapA is eventually degraded.

The protein localises to the cell membrane. Its function is as follows. Uric acid-xanthine transporter. This chain is Uric acid-xanthine permease (uapA), found in Emericella nidulans (strain FGSC A4 / ATCC 38163 / CBS 112.46 / NRRL 194 / M139) (Aspergillus nidulans).